The chain runs to 2605 residues: Non-reducing polyketide synthase dbaI (2605 aa).

The N-terminal acylcarrier protein transacylase domain (SAT) stretch occupies residues 97–243; the sequence is PNTLLIPLVM…PASEISDLHR (147 aa). The Nucleophile; for transacylase activity role is filled by cysteine 144. Histidine 262 functions as the Proton donor/acceptor; for transacylase activity in the catalytic mechanism. The region spanning 382–798 is the Ketosynthase family 3 (KS3) domain; the sequence is ENDIAVVGMS…GSNASIVVTQ (417 aa). Catalysis depends on for beta-ketoacyl synthase activity residues cysteine 547, histidine 682, and histidine 721. The tract at residues 908 to 1195 is malonyl-CoA:ACP transacylase (MAT) domain; that stretch reads FGGQVSTFVG…VTNMASRALG (288 aa). Residues 1285–1420 form an N-terminal hotdog fold region; sequence PNTLLTFVGY…GRVIFRSISD (136 aa). Positions 1285–1596 constitute a PKS/mFAS DH domain; that stretch reads PNTLLTFVGY…YVKIPKASMS (312 aa). A product template (PT) domain region spans residues 1316 to 1594; the sequence is LIRGHIIAQT…ISYVKIPKAS (279 aa). Catalysis depends on histidine 1320, which acts as the Proton acceptor; for dehydratase activity. The interval 1447 to 1596 is C-terminal hotdog fold; the sequence is EVDEVLQNRN…YVKIPKASMS (150 aa). The Proton donor; for dehydratase activity role is filled by aspartate 1504. One can recognise a Carrier domain in the interval 1665–1739; the sequence is GQLTQRIKSI…SLIKCVRKAM (75 aa). Position 1699 is an O-(pantetheine 4'-phosphoryl)serine (serine 1699). Positions 1742–1780 are disordered; it reads DADSAEYTTEQSTSEAADSDDKSTNYTTPSTPGEEALDM. Positions 1747–1757 are enriched in polar residues; the sequence is EYTTEQSTSEA. A methyltransferase domain region spans residues 1963-2151; the sequence is DWPLNRLFYR…VGYGHVDWTD (189 aa). Residues 2230–2473 are NADPH-binding (R) domain; that stretch reads VTGATGSLGC…LSWTPVDVVA (244 aa).

It catalyses the reaction 4 malonyl-CoA + acetyl-CoA + AH2 + S-adenosyl-L-methionine + 3 H(+) = 2,4-dihydroxy-3-methyl-6-(2-oxopropyl)benzaldehyde + A + S-adenosyl-L-homocysteine + 4 CO2 + 5 CoA + H2O. The protein operates within secondary metabolite biosynthesis. Its function is as follows. Non-reducing polyketide synthase; part of the gene cluster that mediates the biosynthesis of the antibiotic 2,4-dihydroxy-3-methyl-6-(2-oxopropyl)benzaldehyde (DHMBA) and its derivatives. The direct non-reducing polyketide synthase dbaI product is 2,4-dihydroxy-3-methyl-6-(2-oxopropyl)benzaldehyde (DHMBA), produced by condensation of one acetyl-CoA starter unit with 4 malonyl-CoA units and one methylation step. The FAD-dependent monooxygenase dbaH is responsible for the synthesis of yellow pigments derived from the oxidation of DHMBA. The roles of dbaB, C, E and F have still to be determined. This Emericella nidulans (strain FGSC A4 / ATCC 38163 / CBS 112.46 / NRRL 194 / M139) (Aspergillus nidulans) protein is Non-reducing polyketide synthase dbaI.